Reading from the N-terminus, the 304-residue chain is HTH-type transcriptional regulator BenM (304 aa).

Positions 1–58 (MELRHLRYFVAVVEEQSFTKAADKLCIAQPPLSRQIQNLEEELGIQLLERGSRPVKTT) constitute an HTH lysR-type domain. Positions 18-37 (FTKAADKLCIAQPPLSRQIQ) form a DNA-binding region, H-T-H motif. 2 residues coordinate benzoate: Ser99 and Leu104. Position 99 (Ser99) interacts with cis,cis-muconate. Thr128 is a binding site for cis,cis-muconate. Residues Phe144, Arg160, and Asn202 each contribute to the benzoate site. Phe203 provides a ligand contact to cis,cis-muconate. Benzoate is bound at residue Tyr293.

The protein belongs to the LysR transcriptional regulatory family. As to quaternary structure, homotetramer; dimer of dimers. The dimers can also associate to form linear, higher oligomers (in vitro).

Its function is as follows. Positive regulator of the ben and cat genes for benzoate degradation. BenM is necessary for ben gene expression but not for expression of the cat genes, which can be regulated by CatM. Binds to the inducers cis,cis-muconate and benzoate. The polypeptide is HTH-type transcriptional regulator BenM (benM) (Acinetobacter baylyi (strain ATCC 33305 / BD413 / ADP1)).